A 464-amino-acid polypeptide reads, in one-letter code: ATP synthase subunit beta 2 (464 aa).

147–154 (GGAGVGKT) lines the ATP pocket.

It belongs to the ATPase alpha/beta chains family. As to quaternary structure, F-type ATPases have 2 components, CF(1) - the catalytic core - and CF(0) - the membrane proton channel. CF(1) has five subunits: alpha(3), beta(3), gamma(1), delta(1), epsilon(1). CF(0) has four main subunits: a(1), b(1), b'(1) and c(9-12).

The protein localises to the cell inner membrane. The catalysed reaction is ATP + H2O + 4 H(+)(in) = ADP + phosphate + 5 H(+)(out). In terms of biological role, produces ATP from ADP in the presence of a proton gradient across the membrane. The catalytic sites are hosted primarily by the beta subunits. This Cereibacter sphaeroides (strain ATCC 17023 / DSM 158 / JCM 6121 / CCUG 31486 / LMG 2827 / NBRC 12203 / NCIMB 8253 / ATH 2.4.1.) (Rhodobacter sphaeroides) protein is ATP synthase subunit beta 2.